A 292-amino-acid polypeptide reads, in one-letter code: uncharacterized protein (292 aa).

A helical transmembrane segment spans residues valine 175 to phenylalanine 197.

It is found in the membrane. This is an uncharacterized protein from Methanocaldococcus jannaschii (strain ATCC 43067 / DSM 2661 / JAL-1 / JCM 10045 / NBRC 100440) (Methanococcus jannaschii).